The sequence spans 968 residues: RNA polymerase-associated protein RapA (968 aa).

The Helicase ATP-binding domain maps to Glu-164–Asp-334. Position 177–184 (Asp-177–Thr-184) interacts with ATP. The short motif at Asp-280–His-283 is the DEAH box element. Residues Arg-490 to Asp-664 enclose the Helicase C-terminal domain.

The protein belongs to the SNF2/RAD54 helicase family. RapA subfamily. As to quaternary structure, interacts with the RNAP. Has a higher affinity for the core RNAP than for the holoenzyme. Its ATPase activity is stimulated by binding to RNAP.

Its function is as follows. Transcription regulator that activates transcription by stimulating RNA polymerase (RNAP) recycling in case of stress conditions such as supercoiled DNA or high salt concentrations. Probably acts by releasing the RNAP, when it is trapped or immobilized on tightly supercoiled DNA. Does not activate transcription on linear DNA. Probably not involved in DNA repair. The sequence is that of RNA polymerase-associated protein RapA from Yersinia enterocolitica serotype O:8 / biotype 1B (strain NCTC 13174 / 8081).